The sequence spans 512 residues: Histidine ammonia-lyase (512 aa).

The segment at residues 145 to 147 (ASG) is a cross-link (5-imidazolinone (Ala-Gly)). Ser-146 carries the 2,3-didehydroalanine (Ser) modification.

It belongs to the PAL/histidase family. Contains an active site 4-methylidene-imidazol-5-one (MIO), which is formed autocatalytically by cyclization and dehydration of residues Ala-Ser-Gly.

Its subcellular location is the cytoplasm. It catalyses the reaction L-histidine = trans-urocanate + NH4(+). Its pathway is amino-acid degradation; L-histidine degradation into L-glutamate; N-formimidoyl-L-glutamate from L-histidine: step 1/3. In Pseudomonas fluorescens (strain SBW25), this protein is Histidine ammonia-lyase.